Here is a 788-residue protein sequence, read N- to C-terminus: Phenylalanine--tRNA ligase beta subunit (788 aa).

Residues 39–147 (FNVSGEIITA…DPVELGVNVV (109 aa)) enclose the tRNA-binding domain. The 74-residue stretch at 399–472 (IEPKKVMLRK…RIYGYEKVES (74 aa)) folds into the B5 domain. Residues aspartate 450, aspartate 456, glutamate 459, and glutamate 460 each contribute to the Mg(2+) site. The region spanning 694-787 (PRFPAVRRDI…AEREFGIRRR (94 aa)) is the FDX-ACB domain.

It belongs to the phenylalanyl-tRNA synthetase beta subunit family. Type 1 subfamily. Tetramer of two alpha and two beta subunits. Mg(2+) is required as a cofactor.

The protein localises to the cytoplasm. The catalysed reaction is tRNA(Phe) + L-phenylalanine + ATP = L-phenylalanyl-tRNA(Phe) + AMP + diphosphate + H(+). The chain is Phenylalanine--tRNA ligase beta subunit (pheT) from Thermotoga maritima (strain ATCC 43589 / DSM 3109 / JCM 10099 / NBRC 100826 / MSB8).